Here is a 162-residue protein sequence, read N- to C-terminus: Transcription elongation factor GreA (162 aa).

Positions Y50–K75 form a coiled coil.

This sequence belongs to the GreA/GreB family.

Its function is as follows. Necessary for efficient RNA polymerase transcription elongation past template-encoded arresting sites. The arresting sites in DNA have the property of trapping a certain fraction of elongating RNA polymerases that pass through, resulting in locked ternary complexes. Cleavage of the nascent transcript by cleavage factors such as GreA or GreB allows the resumption of elongation from the new 3'terminus. GreA releases sequences of 2 to 3 nucleotides. The chain is Transcription elongation factor GreA from Saccharopolyspora erythraea (strain ATCC 11635 / DSM 40517 / JCM 4748 / NBRC 13426 / NCIMB 8594 / NRRL 2338).